Here is a 334-residue protein sequence, read N- to C-terminus: N-acetyl-gamma-glutamyl-phosphate reductase (334 aa).

Cys-142 is an active-site residue.

It belongs to the NAGSA dehydrogenase family. Type 1 subfamily.

The protein localises to the cytoplasm. The enzyme catalyses N-acetyl-L-glutamate 5-semialdehyde + phosphate + NADP(+) = N-acetyl-L-glutamyl 5-phosphate + NADPH + H(+). It functions in the pathway amino-acid biosynthesis; L-arginine biosynthesis; N(2)-acetyl-L-ornithine from L-glutamate: step 3/4. In terms of biological role, catalyzes the NADPH-dependent reduction of N-acetyl-5-glutamyl phosphate to yield N-acetyl-L-glutamate 5-semialdehyde. The protein is N-acetyl-gamma-glutamyl-phosphate reductase of Pelodictyon phaeoclathratiforme (strain DSM 5477 / BU-1).